The sequence spans 313 residues: Protoheme IX farnesyltransferase (313 aa).

The next 9 membrane-spanning stretches (helical) occupy residues 22–42 (FALLKPRVMSLVVFTAFVGLM), 46–66 (IGVHPVIGFCAILFIAIGGGA), 98–118 (GEALSLGLALSGLSVIMLALA), 121–141 (VFAGAFLAFTIFFYVVIYTMW), 150–170 (IVIGGAAGAFPPVIGWIAATG), 177–197 (WLMFALTFLWTPPHFWALALF), 223–243 (ILVYTVILAAFALTTAFTSVG), 246–266 (IYLTTAVVLNALFLKGAVQIW), and 284–304 (FFKLSLLYLFLHFGAILAEAL).

This sequence belongs to the UbiA prenyltransferase family. Protoheme IX farnesyltransferase subfamily. In terms of assembly, interacts with CtaA.

Its subcellular location is the cell inner membrane. It carries out the reaction heme b + (2E,6E)-farnesyl diphosphate + H2O = Fe(II)-heme o + diphosphate. It functions in the pathway porphyrin-containing compound metabolism; heme O biosynthesis; heme O from protoheme: step 1/1. Functionally, converts heme B (protoheme IX) to heme O by substitution of the vinyl group on carbon 2 of heme B porphyrin ring with a hydroxyethyl farnesyl side group. The polypeptide is Protoheme IX farnesyltransferase (Ruegeria sp. (strain TM1040) (Silicibacter sp.)).